The chain runs to 184 residues: Photosystem I assembly protein Ycf4 (184 aa).

2 consecutive transmembrane segments (helical) span residues 22-42 and 57-77; these read FFWA…GTSS and ISFF…LFIS.

The protein belongs to the Ycf4 family.

The protein localises to the plastid. It is found in the chloroplast thylakoid membrane. In terms of biological role, seems to be required for the assembly of the photosystem I complex. The sequence is that of Photosystem I assembly protein Ycf4 from Lemna minor (Common duckweed).